A 236-amino-acid polypeptide reads, in one-letter code: Ubiquitin carboxyl-terminal hydrolase YUH1 (236 aa).

Residues 7–233 form the UCH catalytic domain; that stretch reads AVVPIESNPE…LNFAMLGLGP (227 aa). The interval 10–15 is interaction with ubiquitin; sequence PIESNP. Catalysis depends on C90, which acts as the Nucleophile. The interval 149–157 is interaction with ubiquitin; the sequence is FSTGQSEAP. The active-site Proton donor is H166. An interaction with ubiquitin region spans residues 219–228; the sequence is NEEDVLNFAM.

It belongs to the peptidase C12 family.

The enzyme catalyses Thiol-dependent hydrolysis of ester, thioester, amide, peptide and isopeptide bonds formed by the C-terminal Gly of ubiquitin (a 76-residue protein attached to proteins as an intracellular targeting signal).. In terms of biological role, deubiquitinating enzyme (DUB) that controls levels of cellular ubiquitin through processing of ubiquitin precursors and ubiquitinated proteins. Thiol protease that recognizes and hydrolyzes a peptide bond at the C-terminal glycine of either ubiquitin or RUB1. Preferentially cleaves ubiquitin from peptides and small adducts. This is Ubiquitin carboxyl-terminal hydrolase YUH1 (YUH1) from Saccharomyces cerevisiae (strain ATCC 204508 / S288c) (Baker's yeast).